We begin with the raw amino-acid sequence, 160 residues long: Transcription elongation factor GreA (160 aa).

The stretch at 1 to 72 (MAEKTYPMTL…QISSLETKIR (72 aa)) forms a coiled coil.

This sequence belongs to the GreA/GreB family.

Functionally, necessary for efficient RNA polymerase transcription elongation past template-encoded arresting sites. The arresting sites in DNA have the property of trapping a certain fraction of elongating RNA polymerases that pass through, resulting in locked ternary complexes. Cleavage of the nascent transcript by cleavage factors such as GreA or GreB allows the resumption of elongation from the new 3'terminus. GreA releases sequences of 2 to 3 nucleotides. This is Transcription elongation factor GreA from Streptococcus pneumoniae serotype 4 (strain ATCC BAA-334 / TIGR4).